Consider the following 123-residue polypeptide: Putative C-type lectin protein FPV003/FPV258 (123 aa).

The 102-residue stretch at 21 to 122 (CRGPYTSYNN…CNATYGFVCI (102 aa)) folds into the C-type lectin domain.

This is Putative C-type lectin protein FPV003/FPV258 from Fowlpox virus (strain NVSL) (FPV).